The following is a 251-amino-acid chain: SNAP25 homologous protein SNAP29 (251 aa).

Positions 1-52 (MAPKNSSWNPFDDEKEAAKSFSLNPFDDDDDDKEVEKRFTSSLKPSGGKENQ) are disordered. The span at 40–52 (TSSLKPSGGKENQ) shows a compositional bias: polar residues. In terms of domain architecture, t-SNARE coiled-coil homology spans 186 to 248 (KTQIAKQDEA…KQSNQRARYL (63 aa)).

Belongs to the SNAP-25 family.

It is found in the membrane. The protein resides in the cytoplasm. In terms of biological role, SNAREs, soluble N-ethylmaleimide-sensitive factor-attachment protein receptors, are essential proteins for fusion of cellular membranes. SNAREs localized on opposing membranes assemble to form a trans-SNARE complex, an extended, parallel four alpha-helical bundle that drives membrane fusion. This Arabidopsis thaliana (Mouse-ear cress) protein is SNAP25 homologous protein SNAP29 (SNAP29).